Consider the following 259-residue polypeptide: HTH-type quorum sensing-dependent transcriptional regulator VjbR (259 aa).

A C12-HSL binding region spans residues 76 to 179 (KNYFAIDPVF…AGIIHGTVCG (104 aa)). The region spanning 183–248 (ANSVASLLTP…SAVATALSLG (66 aa)) is the HTH luxR-type domain. The segment at residues 207 to 226 (DGEIAEILSIARWTVVTYLQ) is a DNA-binding region (H-T-H motif).

Its function is as follows. Transcriptional regulator involved in the global control of Brucella gene expression. Mediates the effects of the quorum sensing autoinducer C12-HSL (N-dodecanoyl-homoserine lactone) on a large and diverse number of genes. In Brucella ovis (strain ATCC 25840 / 63/290 / NCTC 10512), this protein is HTH-type quorum sensing-dependent transcriptional regulator VjbR (vjbR).